Here is a 123-residue protein sequence, read N- to C-terminus: Small ribosomal subunit protein uS12 (123 aa).

Asp-89 carries the 3-methylthioaspartic acid modification.

It belongs to the universal ribosomal protein uS12 family. As to quaternary structure, part of the 30S ribosomal subunit. Contacts proteins S8 and S17. May interact with IF1 in the 30S initiation complex.

Functionally, with S4 and S5 plays an important role in translational accuracy. In terms of biological role, interacts with and stabilizes bases of the 16S rRNA that are involved in tRNA selection in the A site and with the mRNA backbone. Located at the interface of the 30S and 50S subunits, it traverses the body of the 30S subunit contacting proteins on the other side and probably holding the rRNA structure together. The combined cluster of proteins S8, S12 and S17 appears to hold together the shoulder and platform of the 30S subunit. In Rhodospirillum centenum (strain ATCC 51521 / SW), this protein is Small ribosomal subunit protein uS12.